We begin with the raw amino-acid sequence, 1873 residues long: SAGA complex subunit Spt20 (1873 aa).

The protein belongs to the SPT20 family. In terms of assembly, component of the Spt-Ada-Gcn5 acetyltransferase (SAGA) complex consisting of wda/Taf5L, Saf6, Taf9, Taf10b, Taf12, Ada1, Spt3, Spt7, Spt20, Sf3b3, Sf3b5, Nipped-A/Tra1, a histone acetyltransferase (HAT) module made up of Gcn5, Ada2b (Isoform B), Ada3 and Sgf29, and a deubiquitinase (DUB) module made up of not/nonstop, Sgf11 and e(y)2 tethered to SAGA by Atxn7.

It localises to the nucleus. Its function is as follows. Component of the transcription regulatory complex SAGA, a multiprotein complex that activates transcription by remodeling chromatin and mediating histone acetylation and deubiquitination. The SAGA complex predominantly acetylates histone H3. The chain is SAGA complex subunit Spt20 from Drosophila melanogaster (Fruit fly).